Consider the following 311-residue polypeptide: CARD domain-containing protein E10 (311 aa).

Positions 21 to 110 (IWDVERLCLE…EHLVDLLERA (90 aa)) constitute a CARD domain. Disordered stretches follow at residues 125–181 (ESGA…GGVY), 203–230 (GAGR…GGRD), and 243–311 (IPEP…FFCC). The span at 140-152 (EDNSGYTALLPTN) shows a compositional bias: polar residues. The span at 252–272 (SGGGGRGGGVRYDAGGDGRLG) shows a compositional bias: gly residues.

The protein resides in the host cell membrane. Functionally, activates host NF-kappa-B and JNK pathways. Induces hyperphosphorylation and redistribution of host bcl-10 from the cytoplasm to the plasma membrane. The inhibitory effect of cellular bcl-10 on NF-kappa-B pathway is then overcome allowing NF-kappa-B activation. The sequence is that of CARD domain-containing protein E10 (E10) from Equus caballus (Horse).